A 132-amino-acid polypeptide reads, in one-letter code: Ribosome-binding factor A (132 aa).

This sequence belongs to the RbfA family. As to quaternary structure, monomer. Binds 30S ribosomal subunits, but not 50S ribosomal subunits or 70S ribosomes.

The protein resides in the cytoplasm. In terms of biological role, one of several proteins that assist in the late maturation steps of the functional core of the 30S ribosomal subunit. Associates with free 30S ribosomal subunits (but not with 30S subunits that are part of 70S ribosomes or polysomes). Required for efficient processing of 16S rRNA. May interact with the 5'-terminal helix region of 16S rRNA. This chain is Ribosome-binding factor A, found in Burkholderia vietnamiensis (strain G4 / LMG 22486) (Burkholderia cepacia (strain R1808)).